Here is an 87-residue protein sequence, read N- to C-terminus: Defensin-like protein 100 (87 aa).

The first 29 residues, 1–29 (MRSLRLRTVVVATIVVCLSVLLSPTEVDG), serve as a signal peptide directing secretion. 4 disulfide bridges follow: Cys-31/Cys-79, Cys-38/Cys-64, Cys-44/Cys-76, and Cys-48/Cys-78.

Belongs to the DEFL family.

It is found in the secreted. The sequence is that of Defensin-like protein 100 from Arabidopsis thaliana (Mouse-ear cress).